Reading from the N-terminus, the 238-residue chain is Ditrans,polycis-undecaprenyl-diphosphate synthase ((2E,6E)-farnesyl-diphosphate specific) (238 aa).

D14 is an active-site residue. D14 is a Mg(2+) binding site. Substrate-binding positions include 15-18 (GNGR), W19, R27, H31, and 59-61 (SSE). N62 acts as the Proton acceptor in catalysis. Substrate is bound by residues W63, R65, R182, and 188 to 190 (RIS). E201 provides a ligand contact to Mg(2+).

Belongs to the UPP synthase family. In terms of assembly, homodimer. Mg(2+) is required as a cofactor.

The enzyme catalyses 8 isopentenyl diphosphate + (2E,6E)-farnesyl diphosphate = di-trans,octa-cis-undecaprenyl diphosphate + 8 diphosphate. Functionally, catalyzes the sequential condensation of isopentenyl diphosphate (IPP) with (2E,6E)-farnesyl diphosphate (E,E-FPP) to yield (2Z,6Z,10Z,14Z,18Z,22Z,26Z,30Z,34E,38E)-undecaprenyl diphosphate (di-trans,octa-cis-UPP). UPP is the precursor of glycosyl carrier lipid in the biosynthesis of bacterial cell wall polysaccharide components such as peptidoglycan and lipopolysaccharide. The sequence is that of Ditrans,polycis-undecaprenyl-diphosphate synthase ((2E,6E)-farnesyl-diphosphate specific) from Legionella pneumophila subsp. pneumophila (strain Philadelphia 1 / ATCC 33152 / DSM 7513).